An 867-amino-acid polypeptide reads, in one-letter code: Nitrate reductase [NADPH] (867 aa).

Positions aspartate 38–threonine 58 are disordered. Cysteine 152 contributes to the Mo-molybdopterin binding site. The Cytochrome b5 heme-binding domain maps to asparagine 514–aspartate 589. Heme contacts are provided by histidine 549 and histidine 572. The FAD-binding FR-type domain occupies lysine 615–leucine 726. FAD-binding positions include arginine 669–threonine 672, leucine 686–tyrosine 690, phenylalanine 691, lysine 700–threonine 702, and threonine 753. Methionine 837 to methionine 846 provides a ligand contact to NADP(+).

Belongs to the nitrate reductase family. As to quaternary structure, homodimer. FAD serves as cofactor. The cofactor is heme. It depends on Mo-molybdopterin as a cofactor.

It carries out the reaction nitrite + NADP(+) + H2O = nitrate + NADPH + H(+). Its function is as follows. Nitrate reductase is a key enzyme involved in the first step of nitrate assimilation in plants, fungi and bacteria. The sequence is that of Nitrate reductase [NADPH] (niaD) from Aspergillus niger.